Here is a 334-residue protein sequence, read N- to C-terminus: DnaJ protein homolog 1 (334 aa).

The 65-residue stretch at 4-68 folds into the J domain; that stretch reads DFYKILGLER…KKRDIFDNYG (65 aa). Ser-187 is subject to Phosphoserine.

The protein resides in the cytoplasm. In Drosophila melanogaster (Fruit fly), this protein is DnaJ protein homolog 1 (DnaJ-1).